We begin with the raw amino-acid sequence, 319 residues long: Alpha-hemolysin (319 aa).

A signal peptide spans 1–26 (MKTRIVSSVTTTLLLGSILMNPVANA).

This sequence belongs to the aerolysin family. Self-assembles to form first a non-lytic oligomeric intermediate and then, a mushroom-shaped homoheptamer structure of 100 Angstroms in length and up to 100 Angstroms in diameter.

Its subcellular location is the secreted. Its function is as follows. Alpha-toxin binds to the membrane of eukaryotic cells resulting in the release of low-molecular weight molecules and leading to an eventual osmotic lysis. Inhibits host neutrophil chemotaxis to the lesion region. Heptamer oligomerization and pore formation is required for lytic activity. This is Alpha-hemolysin (hly) from Staphylococcus aureus (strain NCTC 8325 / PS 47).